We begin with the raw amino-acid sequence, 279 residues long: 3-methyl-2-oxobutanoate hydroxymethyltransferase (279 aa).

Mg(2+) contacts are provided by D43 and D82. Residues 43–44, D82, and K112 each bind 3-methyl-2-oxobutanoate; that span reads DS. Mg(2+) is bound at residue E114. E181 (proton acceptor) is an active-site residue.

The protein belongs to the PanB family. In terms of assembly, homodecamer; pentamer of dimers. Mg(2+) is required as a cofactor.

The protein localises to the cytoplasm. It carries out the reaction 3-methyl-2-oxobutanoate + (6R)-5,10-methylene-5,6,7,8-tetrahydrofolate + H2O = 2-dehydropantoate + (6S)-5,6,7,8-tetrahydrofolate. It participates in cofactor biosynthesis; (R)-pantothenate biosynthesis; (R)-pantoate from 3-methyl-2-oxobutanoate: step 1/2. In terms of biological role, catalyzes the reversible reaction in which hydroxymethyl group from 5,10-methylenetetrahydrofolate is transferred onto alpha-ketoisovalerate to form ketopantoate. The protein is 3-methyl-2-oxobutanoate hydroxymethyltransferase of Geobacillus thermodenitrificans (strain NG80-2).